The following is a 67-amino-acid chain: MFTLKKSLLLIFFLGTINLSLCEEERNADEEERRDDPEERDVEVEKRFLSLALAALPKFLCLVFKKC.

Positions 1–22 are cleaved as a signal peptide; sequence MFTLKKSLLLIFFLGTINLSLC. Positions 23–45 are excised as a propeptide; it reads EEERNADEEERRDDPEERDVEVE. Cys-61 and Cys-67 are joined by a disulfide.

Belongs to the frog skin active peptide (FSAP) family. Brevinin subfamily. As to expression, expressed by the skin glands.

It localises to the secreted. Functionally, antimicrobial peptide. The sequence is that of Brevinin-1CDYc from Rana huanrensis (Huanren frog).